Reading from the N-terminus, the 192-residue chain is Elongation factor P (192 aa).

Belongs to the elongation factor P family.

It localises to the cytoplasm. Its pathway is protein biosynthesis; polypeptide chain elongation. Its function is as follows. Involved in peptide bond synthesis. Stimulates efficient translation and peptide-bond synthesis on native or reconstituted 70S ribosomes in vitro. Probably functions indirectly by altering the affinity of the ribosome for aminoacyl-tRNA, thus increasing their reactivity as acceptors for peptidyl transferase. The chain is Elongation factor P from Borrelia recurrentis (strain A1).